A 222-amino-acid chain; its full sequence is GEM-like protein 4 (222 aa).

The 79-residue stretch at 95 to 173 folds into the GRAM domain; that stretch reads KIFKRLFRVS…CKIDRVNQSQ (79 aa).

The protein belongs to the GEM family.

This is GEM-like protein 4 from Arabidopsis thaliana (Mouse-ear cress).